A 428-amino-acid polypeptide reads, in one-letter code: Cyclin-B1-1 (428 aa).

Belongs to the cyclin family. Cyclin AB subfamily. As to quaternary structure, interacts with FZR2/CCS52A1, FZR1/CCS52A2 and FZR3/CCS52B. As to expression, expressed in root tip, lateral root apex, shoot apex, leaf primordia, axillary buds, stamen and petal primordia, ovules and developing embryo.

The protein localises to the nucleus. The chain is Cyclin-B1-1 (CYCB1-1) from Arabidopsis thaliana (Mouse-ear cress).